We begin with the raw amino-acid sequence, 423 residues long: Glutamate-1-semialdehyde 2,1-aminomutase (423 aa).

N6-(pyridoxal phosphate)lysine is present on lysine 258.

The protein belongs to the class-III pyridoxal-phosphate-dependent aminotransferase family. HemL subfamily. Requires pyridoxal 5'-phosphate as cofactor.

It is found in the cytoplasm. It carries out the reaction (S)-4-amino-5-oxopentanoate = 5-aminolevulinate. It functions in the pathway porphyrin-containing compound metabolism; protoporphyrin-IX biosynthesis; 5-aminolevulinate from L-glutamyl-tRNA(Glu): step 2/2. The sequence is that of Glutamate-1-semialdehyde 2,1-aminomutase from Pyrobaculum aerophilum (strain ATCC 51768 / DSM 7523 / JCM 9630 / CIP 104966 / NBRC 100827 / IM2).